The following is a 97-amino-acid chain: MALTKAEMAEHLFETLGINKRVAKEMVEAFFEEIRQALESGEQVKLSGFGNFDLRDKNQRPGRNPKTGEDIPISARRVVTFRPGQKLKSRVEEANAK.

The tract at residues 49-71 (FGNFDLRDKNQRPGRNPKTGEDI) is disordered.

This sequence belongs to the bacterial histone-like protein family. As to quaternary structure, heterodimer of an alpha and a beta chain.

This protein is one of the two subunits of integration host factor, a specific DNA-binding protein that functions in genetic recombination as well as in transcriptional and translational control. The protein is Integration host factor subunit alpha of Shewanella woodyi (strain ATCC 51908 / MS32).